Here is a 465-residue protein sequence, read N- to C-terminus: Methionine aminopeptidase 2-1 (465 aa).

A disordered region spans residues 1–100; that stretch reads MGSKTAENES…QSSPPRIPLA (100 aa). A compositionally biased stretch (basic and acidic residues) spans 31-40; sequence RGAHWSRDGD. Residues 75-87 are compositionally biased toward basic residues; the sequence is SKKRKKRPKKKTS. His216 lines the substrate pocket. Residues Asp237, Asp248, and His317 each contribute to the a divalent metal cation site. His325 lines the substrate pocket. Glu350 and Glu446 together coordinate a divalent metal cation.

Belongs to the peptidase M24A family. Methionine aminopeptidase eukaryotic type 2 subfamily. Co(2+) is required as a cofactor. Zn(2+) serves as cofactor. The cofactor is Mn(2+). Requires Fe(2+) as cofactor.

The protein localises to the cytoplasm. It catalyses the reaction Release of N-terminal amino acids, preferentially methionine, from peptides and arylamides.. In terms of biological role, cotranslationally removes the N-terminal methionine from nascent proteins. The N-terminal methionine is often cleaved when the second residue in the primary sequence is small and uncharged (Met-Ala-, Cys, Gly, Pro, Ser, Thr, or Val). The sequence is that of Methionine aminopeptidase 2-1 from Penicillium rubens (strain ATCC 28089 / DSM 1075 / NRRL 1951 / Wisconsin 54-1255) (Penicillium chrysogenum).